Here is a 602-residue protein sequence, read N- to C-terminus: Proteasome-associated ATPase (602 aa).

Positions 13-89 (PDAAEVERLR…LREEVDRLGQ (77 aa)) form a coiled coil. 289-294 (GCGKTL) contacts ATP. A docks into pockets in the proteasome alpha-ring region spans residues 601–602 (YL).

This sequence belongs to the AAA ATPase family. In terms of assembly, homohexamer. Assembles into a hexameric ring structure that caps the 20S proteasome core. Strongly interacts with the prokaryotic ubiquitin-like protein Pup through a hydrophobic interface; the interacting region of ARC lies in its N-terminal coiled-coil domain. There is one Pup binding site per ARC hexamer ring. Upon ATP-binding, the C-terminus of ARC interacts with the alpha-rings of the proteasome core, possibly by binding to the intersubunit pockets.

Its pathway is protein degradation; proteasomal Pup-dependent pathway. In terms of biological role, ATPase which is responsible for recognizing, binding, unfolding and translocation of pupylated proteins into the bacterial 20S proteasome core particle. May be essential for opening the gate of the 20S proteasome via an interaction with its C-terminus, thereby allowing substrate entry and access to the site of proteolysis. Thus, the C-termini of the proteasomal ATPase may function like a 'key in a lock' to induce gate opening and therefore regulate proteolysis. In Mycobacteroides abscessus (strain ATCC 19977 / DSM 44196 / CCUG 20993 / CIP 104536 / JCM 13569 / NCTC 13031 / TMC 1543 / L948) (Mycobacterium abscessus), this protein is Proteasome-associated ATPase.